The following is a 160-amino-acid chain: Cyclic pyranopterin monophosphate synthase (160 aa).

Substrate-binding positions include 74 to 76 (LSH) and 112 to 113 (ME). The active site involves D127.

This sequence belongs to the MoaC family. As to quaternary structure, homohexamer; trimer of dimers.

It carries out the reaction (8S)-3',8-cyclo-7,8-dihydroguanosine 5'-triphosphate = cyclic pyranopterin phosphate + diphosphate. The protein operates within cofactor biosynthesis; molybdopterin biosynthesis. Functionally, catalyzes the conversion of (8S)-3',8-cyclo-7,8-dihydroguanosine 5'-triphosphate to cyclic pyranopterin monophosphate (cPMP). The protein is Cyclic pyranopterin monophosphate synthase of Trichlorobacter lovleyi (strain ATCC BAA-1151 / DSM 17278 / SZ) (Geobacter lovleyi).